A 441-amino-acid polypeptide reads, in one-letter code: tRNA-2-methylthio-N(6)-dimethylallyladenosine synthase (441 aa).

The region spanning 5 to 121 (KKLYLETFGC…LQGMVAAAEE (117 aa)) is the MTTase N-terminal domain. C14, C50, C84, C159, C163, and C166 together coordinate [4Fe-4S] cluster. A Radical SAM core domain is found at 145 to 375 (AEGGVTRFVT…QAAQKKTTLA (231 aa)). Positions 378 to 440 (RSLEGTVQKV…QTLLKGEIVH (63 aa)) constitute a TRAM domain.

The protein belongs to the methylthiotransferase family. MiaB subfamily. As to quaternary structure, monomer. [4Fe-4S] cluster is required as a cofactor.

The protein resides in the cytoplasm. It catalyses the reaction N(6)-dimethylallyladenosine(37) in tRNA + (sulfur carrier)-SH + AH2 + 2 S-adenosyl-L-methionine = 2-methylsulfanyl-N(6)-dimethylallyladenosine(37) in tRNA + (sulfur carrier)-H + 5'-deoxyadenosine + L-methionine + A + S-adenosyl-L-homocysteine + 2 H(+). Catalyzes the methylthiolation of N6-(dimethylallyl)adenosine (i(6)A), leading to the formation of 2-methylthio-N6-(dimethylallyl)adenosine (ms(2)i(6)A) at position 37 in tRNAs that read codons beginning with uridine. The polypeptide is tRNA-2-methylthio-N(6)-dimethylallyladenosine synthase (Citrifermentans bemidjiense (strain ATCC BAA-1014 / DSM 16622 / JCM 12645 / Bem) (Geobacter bemidjiensis)).